The chain runs to 468 residues: 3-isopropylmalate dehydratase large subunit (468 aa).

[4Fe-4S] cluster contacts are provided by cysteine 347, cysteine 407, and cysteine 410.

Belongs to the aconitase/IPM isomerase family. LeuC type 1 subfamily. Heterodimer of LeuC and LeuD. [4Fe-4S] cluster serves as cofactor.

It carries out the reaction (2R,3S)-3-isopropylmalate = (2S)-2-isopropylmalate. It participates in amino-acid biosynthesis; L-leucine biosynthesis; L-leucine from 3-methyl-2-oxobutanoate: step 2/4. Catalyzes the isomerization between 2-isopropylmalate and 3-isopropylmalate, via the formation of 2-isopropylmaleate. The sequence is that of 3-isopropylmalate dehydratase large subunit from Glaesserella parasuis serovar 5 (strain SH0165) (Haemophilus parasuis).